The sequence spans 231 residues: 2-C-methyl-D-erythritol 2,4-cyclodiphosphate synthase, chloroplastic (231 aa).

The transit peptide at M1–S52 directs the protein to the chloroplast. Residues D82 and H84 each contribute to the a divalent metal cation site. Substrate is bound by residues D82 to H84, H108 to S109, D112 to D120, D130 to G132, F135 to D139, D139, L174 to S180, and A205 to E209. H116 contributes to the a divalent metal cation binding site.

Belongs to the IspF family. Homotrimer. A divalent metal cation is required as a cofactor.

The protein resides in the plastid. Its subcellular location is the chloroplast stroma. The catalysed reaction is 4-CDP-2-C-methyl-D-erythritol 2-phosphate = 2-C-methyl-D-erythritol 2,4-cyclic diphosphate + CMP. It functions in the pathway isoprenoid biosynthesis; isopentenyl diphosphate biosynthesis via DXP pathway; isopentenyl diphosphate from 1-deoxy-D-xylulose 5-phosphate: step 4/6. Functionally, enzyme of the plastid non-mevalonate pathway for isoprenoid biosynthesis that converts 4-diphosphocytidyl-2C-methyl-D-erythritol 2-phosphate into 2C-methyl-D-erythritol 2,4-cyclodiphosphate and CMP. Is essential for chloroplast development. This is 2-C-methyl-D-erythritol 2,4-cyclodiphosphate synthase, chloroplastic from Arabidopsis thaliana (Mouse-ear cress).